The following is a 248-amino-acid chain: 2,3-bisphosphoglycerate-dependent phosphoglycerate mutase (248 aa).

Substrate-binding positions include 8 to 15, 21 to 22, Arg-60, 87 to 90, Lys-98, 114 to 115, and 183 to 184; these read RHGESTWN, TG, ERHY, RR, and GN. His-9 acts as the Tele-phosphohistidine intermediate in catalysis. The active-site Proton donor/acceptor is the Glu-87.

Belongs to the phosphoglycerate mutase family. BPG-dependent PGAM subfamily. In terms of assembly, homodimer.

The enzyme catalyses (2R)-2-phosphoglycerate = (2R)-3-phosphoglycerate. The protein operates within carbohydrate degradation; glycolysis; pyruvate from D-glyceraldehyde 3-phosphate: step 3/5. Its function is as follows. Catalyzes the interconversion of 2-phosphoglycerate and 3-phosphoglycerate. This chain is 2,3-bisphosphoglycerate-dependent phosphoglycerate mutase, found in Paraburkholderia phytofirmans (strain DSM 17436 / LMG 22146 / PsJN) (Burkholderia phytofirmans).